A 240-amino-acid chain; its full sequence is MSAQPIYKRVLLKASGEALMGSQGFGIDVAVADRIASDIAQARAMGVEVGVVVGGGNIFRGVAVASKGGDRVTGDHMGMLATVINALALATSLRKLDIDTVVLSAIAMPEICESFSQRATLYHLSLGRVVIFAGGTGNPFFTTDSAAALRAAEMGAEAIFKGTQVDGIYSADPKKDPSATRFDRLTHSEVLEKGLAVMDVAAVALARENAIPIVVFSIHEKDGFTEILTGGGRATIVTDS.

ATP is bound at residue 13–16 (KASG). The segment at 21 to 26 (GSQGFG) is involved in allosteric activation by GTP. Residue G55 participates in UMP binding. ATP is bound by residues G56 and R60. UMP contacts are provided by residues D75 and 136 to 143 (TGNPFFTT). ATP contacts are provided by T163, Q164, Y169, and D172.

It belongs to the UMP kinase family. As to quaternary structure, homohexamer.

Its subcellular location is the cytoplasm. It catalyses the reaction UMP + ATP = UDP + ADP. The protein operates within pyrimidine metabolism; CTP biosynthesis via de novo pathway; UDP from UMP (UMPK route): step 1/1. Its activity is regulated as follows. Allosterically activated by GTP. Inhibited by UTP. Its function is as follows. Catalyzes the reversible phosphorylation of UMP to UDP. This chain is Uridylate kinase, found in Sinorhizobium medicae (strain WSM419) (Ensifer medicae).